A 310-amino-acid polypeptide reads, in one-letter code: Putative carboxypeptidase SCO6489 (310 aa).

Catalysis depends on S116, which acts as the Nucleophile. Residues E212 and H277 each act as charge relay system in the active site.

This sequence belongs to the peptidase S66 family.

This Streptomyces coelicolor (strain ATCC BAA-471 / A3(2) / M145) protein is Putative carboxypeptidase SCO6489.